The chain runs to 296 residues: Phosphatidylglycerol--prolipoprotein diacylglyceryl transferase (296 aa).

3 consecutive transmembrane segments (helical) span residues 17-37, 59-79, and 97-117; these read LAVR…IVVG, MMFY…VLFY, and GGMS…LFAW. R142 serves as a coordination point for a 1,2-diacyl-sn-glycero-3-phospho-(1'-sn-glycerol). 2 consecutive transmembrane segments (helical) span residues 230–250 and 265–285; these read MGAI…TVEF and LSMG…MMIW.

This sequence belongs to the Lgt family.

The protein resides in the cell inner membrane. It carries out the reaction L-cysteinyl-[prolipoprotein] + a 1,2-diacyl-sn-glycero-3-phospho-(1'-sn-glycerol) = an S-1,2-diacyl-sn-glyceryl-L-cysteinyl-[prolipoprotein] + sn-glycerol 1-phosphate + H(+). It participates in protein modification; lipoprotein biosynthesis (diacylglyceryl transfer). In terms of biological role, catalyzes the transfer of the diacylglyceryl group from phosphatidylglycerol to the sulfhydryl group of the N-terminal cysteine of a prolipoprotein, the first step in the formation of mature lipoproteins. The polypeptide is Phosphatidylglycerol--prolipoprotein diacylglyceryl transferase (Burkholderia thailandensis (strain ATCC 700388 / DSM 13276 / CCUG 48851 / CIP 106301 / E264)).